Reading from the N-terminus, the 190-residue chain is Putative CRISPR system CMR subunit Cmr7 2 (190 aa).

The protein belongs to the CRISPR system Cmr7 family. In terms of assembly, homodimer.

Functionally, CRISPR (clustered regularly interspaced short palindromic repeat) is an adaptive immune system that provides protection against mobile genetic elements (viruses, transposable elements and conjugative plasmids). CRISPR clusters contain spacers, sequences complementary to antecedent mobile elements, and target invading nucleic acids. CRISPR clusters are transcribed and processed into CRISPR RNA (crRNA). This chain is Putative CRISPR system CMR subunit Cmr7 2 (cmr7b), found in Saccharolobus solfataricus (strain ATCC 35092 / DSM 1617 / JCM 11322 / P2) (Sulfolobus solfataricus).